The following is a 68-amino-acid chain: DNA-directed RNA polymerase subunit omega (68 aa).

The protein belongs to the RNA polymerase subunit omega family. In terms of assembly, the RNAP catalytic core consists of 2 alpha, 1 beta, 1 beta' and 1 omega subunit. When a sigma factor is associated with the core the holoenzyme is formed, which can initiate transcription.

It carries out the reaction RNA(n) + a ribonucleoside 5'-triphosphate = RNA(n+1) + diphosphate. Its function is as follows. Promotes RNA polymerase assembly. Latches the N- and C-terminal regions of the beta' subunit thereby facilitating its interaction with the beta and alpha subunits. In Alkaliphilus metalliredigens (strain QYMF), this protein is DNA-directed RNA polymerase subunit omega.